The sequence spans 146 residues: Hemoglobin subunit beta (146 aa).

Residue Val-1 is modified to N-acetylvaline. One can recognise a Globin domain in the interval 2 to 146 (HLTAEEKSAV…VATALAHKYH (145 aa)). Thr-12 carries the phosphothreonine modification. Ser-44 is modified (phosphoserine). Position 59 is an N6-acetyllysine (Lys-59). Heme b is bound at residue His-63. At Lys-82 the chain carries N6-acetyllysine. His-92 contributes to the heme b binding site. S-nitrosocysteine is present on Cys-93. Position 144 is an N6-acetyllysine (Lys-144).

This sequence belongs to the globin family. As to quaternary structure, heterotetramer of two alpha chains and two beta chains. In terms of tissue distribution, red blood cells.

In terms of biological role, involved in oxygen transport from the lung to the various peripheral tissues. The sequence is that of Hemoglobin subunit beta (HBB) from Cebus albifrons (White-fronted capuchin).